The primary structure comprises 335 residues: uncharacterized protein (335 aa).

The protein belongs to the glycosyltransferase group 1 family. Glycosyltransferase 4 subfamily.

This is an uncharacterized protein from Sulfolobus islandicus rod-shaped virus 1 (SIRV-1).